The following is a 168-amino-acid chain: tRNA (cytidine(56)-2'-O)-methyltransferase (168 aa).

S-adenosyl-L-methionine is bound by residues leucine 79 and glycine 104–valine 108.

This sequence belongs to the aTrm56 family. In terms of assembly, homodimer.

Its subcellular location is the cytoplasm. The catalysed reaction is cytidine(56) in tRNA + S-adenosyl-L-methionine = 2'-O-methylcytidine(56) in tRNA + S-adenosyl-L-homocysteine + H(+). Specifically catalyzes the AdoMet-dependent 2'-O-ribose methylation of cytidine at position 56 in tRNAs. This Archaeoglobus fulgidus (strain ATCC 49558 / DSM 4304 / JCM 9628 / NBRC 100126 / VC-16) protein is tRNA (cytidine(56)-2'-O)-methyltransferase.